The following is a 226-amino-acid chain: Amelogenin (226 aa).

The first 16 residues, 1–16 (MGTWILFACLLGTAFA), serve as a signal peptide directing secretion. The residue at position 32 (Ser32) is a Phosphoserine. Residues 86–196 (QQHPPSHTTL…LPPQQALPPM (111 aa)) form a disordered region. 2 stretches are compositionally biased toward low complexity: residues 88 to 120 (HPPS…MPVP) and 137 to 182 (PTSQ…SPLH). Residues 183–192 (PIQPLPPQQA) show a composition bias toward pro residues.

The protein belongs to the amelogenin family.

It is found in the secreted. The protein localises to the extracellular space. The protein resides in the extracellular matrix. Functionally, plays a role in the biomineralization of teeth. Seems to regulate the formation of crystallites during the secretory stage of tooth enamel development. Thought to play a major role in the structural organization and mineralization of developing enamel. This Cavia porcellus (Guinea pig) protein is Amelogenin (AMEL).